Consider the following 350-residue polypeptide: WUSCHEL-related homeobox 1 (350 aa).

The homeobox; WUS-type DNA-binding region spans 72–136; sequence MVSSRWNPTP…NHKARERQKR (65 aa). Residues 283–308 form a disordered region; that stretch reads TNTETCHRNGDDNKDQEQHEDCSNGE.

It belongs to the WUS homeobox family.

It is found in the nucleus. Transcription factor which may be involved in developmental processes. The chain is WUSCHEL-related homeobox 1 (WOX1) from Arabidopsis thaliana (Mouse-ear cress).